The chain runs to 235 residues: 7-cyano-7-deazaguanine synthase (235 aa).

13-23 (FSGGLDSTTCL) contributes to the ATP binding site. The Zn(2+) site is built by C197, C207, C210, and C213.

This sequence belongs to the QueC family. Zn(2+) is required as a cofactor.

It catalyses the reaction 7-carboxy-7-deazaguanine + NH4(+) + ATP = 7-cyano-7-deazaguanine + ADP + phosphate + H2O + H(+). It participates in purine metabolism; 7-cyano-7-deazaguanine biosynthesis. Its function is as follows. Catalyzes the ATP-dependent conversion of 7-carboxy-7-deazaguanine (CDG) to 7-cyano-7-deazaguanine (preQ(0)). This chain is 7-cyano-7-deazaguanine synthase, found in Solidesulfovibrio magneticus (strain ATCC 700980 / DSM 13731 / RS-1) (Desulfovibrio magneticus).